A 433-amino-acid chain; its full sequence is Probable RNA 3'-terminal phosphate cyclase (433 aa).

Low complexity predominate over residues 1-10 (MGKNKNYNKN). The disordered stretch occupies residues 1–28 (MGKNKNYNKNQFKKSKTNNDTTVAQQQQ). Residues 18 to 28 (NNDTTVAQQQQ) are compositionally biased toward polar residues. Residues Gln137 and 328–332 (YLQDQ) each bind ATP. The Tele-AMP-histidine intermediate role is filled by His354. A disordered region spans residues 400–433 (LNNNNNNSNSNTTTTTTTTTISTTTIDNQNSEEK). Positions 401–425 (NNNNNNSNSNTTTTTTTTTISTTTI) are enriched in low complexity.

It belongs to the RNA 3'-terminal cyclase family. Type 1 subfamily.

It localises to the nucleus. The protein localises to the nucleoplasm. It catalyses the reaction a 3'-end 3'-phospho-ribonucleotide-RNA + ATP = a 3'-end 2',3'-cyclophospho-ribonucleotide-RNA + AMP + diphosphate. Catalyzes the conversion of 3'-phosphate to a 2',3'-cyclic phosphodiester at the end of RNA. The mechanism of action of the enzyme occurs in 3 steps: (A) adenylation of the enzyme by ATP; (B) transfer of adenylate to an RNA-N3'P to produce RNA-N3'PP5'A; (C) and attack of the adjacent 2'-hydroxyl on the 3'-phosphorus in the diester linkage to produce the cyclic end product. The biological role of this enzyme is unknown but it is likely to function in some aspects of cellular RNA processing. The protein is Probable RNA 3'-terminal phosphate cyclase (rtca) of Dictyostelium discoideum (Social amoeba).